We begin with the raw amino-acid sequence, 123 residues long: Small ribosomal subunit protein uS12 (123 aa).

At Asp89 the chain carries 3-methylthioaspartic acid. Residues 104-123 (TAGVKDRKQARSKYGAKRPK) are disordered. Over residues 113–123 (ARSKYGAKRPK) the composition is skewed to basic residues.

The protein belongs to the universal ribosomal protein uS12 family. In terms of assembly, part of the 30S ribosomal subunit. Contacts proteins S8 and S17. May interact with IF1 in the 30S initiation complex.

Its function is as follows. With S4 and S5 plays an important role in translational accuracy. In terms of biological role, interacts with and stabilizes bases of the 16S rRNA that are involved in tRNA selection in the A site and with the mRNA backbone. Located at the interface of the 30S and 50S subunits, it traverses the body of the 30S subunit contacting proteins on the other side and probably holding the rRNA structure together. The combined cluster of proteins S8, S12 and S17 appears to hold together the shoulder and platform of the 30S subunit. This is Small ribosomal subunit protein uS12 from Chromobacterium violaceum (strain ATCC 12472 / DSM 30191 / JCM 1249 / CCUG 213 / NBRC 12614 / NCIMB 9131 / NCTC 9757 / MK).